The sequence spans 134 residues: Small ribosomal subunit protein uS11 (134 aa).

Residues 1-24 (MATKMAGVKRAGRKRKERKNIERG) are disordered.

Belongs to the universal ribosomal protein uS11 family. In terms of assembly, part of the 30S ribosomal subunit. Interacts with proteins S7 and S18. Binds to IF-3.

Functionally, located on the platform of the 30S subunit, it bridges several disparate RNA helices of the 16S rRNA. Forms part of the Shine-Dalgarno cleft in the 70S ribosome. The protein is Small ribosomal subunit protein uS11 of Acetivibrio thermocellus (strain ATCC 27405 / DSM 1237 / JCM 9322 / NBRC 103400 / NCIMB 10682 / NRRL B-4536 / VPI 7372) (Clostridium thermocellum).